We begin with the raw amino-acid sequence, 323 residues long: tRNA U34 carboxymethyltransferase (323 aa).

Residues Lys91, Trp105, Lys110, Gly130, 152 to 154, 181 to 182, Met196, Tyr200, and Arg315 contribute to the carboxy-S-adenosyl-L-methionine site; these read DPT and IE.

It belongs to the class I-like SAM-binding methyltransferase superfamily. CmoB family. In terms of assembly, homotetramer.

It carries out the reaction carboxy-S-adenosyl-L-methionine + 5-hydroxyuridine(34) in tRNA = 5-carboxymethoxyuridine(34) in tRNA + S-adenosyl-L-homocysteine + H(+). Its function is as follows. Catalyzes carboxymethyl transfer from carboxy-S-adenosyl-L-methionine (Cx-SAM) to 5-hydroxyuridine (ho5U) to form 5-carboxymethoxyuridine (cmo5U) at position 34 in tRNAs. This chain is tRNA U34 carboxymethyltransferase, found in Salmonella gallinarum (strain 287/91 / NCTC 13346).